A 678-amino-acid polypeptide reads, in one-letter code: ATP-dependent RNA helicase DHX58 (678 aa).

Positions 11–188 (ILPALEGKNI…QGAIDHILQL (178 aa)) constitute a Helicase ATP-binding domain. Residue 24–31 (LPTGAGKT) coordinates ATP. The DECH box signature appears at 131-134 (DECH). In terms of domain architecture, Helicase C-terminal spans 353–514 (MLERILLKQF…KAVAAVQKMD (162 aa)). Positions 489–546 (EMKRELTNEALEVLMEKAVAAVQKMDPDEFKAKIRDLQQASLVKRAARAAHREIQQGQ) form a coiled coil. The RLR CTR domain maps to 542 to 669 (IQQGQFLPEH…PVFDILQDCT (128 aa)). Residues cysteine 556, cysteine 559, cysteine 612, and cysteine 615 each contribute to the Zn(2+) site. The interval 572 to 655 (VEGTHHVNVN…KIQAKKWSRV (84 aa)) is RNA-binding.

Belongs to the helicase family. RLR subfamily. In terms of assembly, monomer in the absence of dsRNA. Homodimer in the presence of dsRNA. Interacts with RIGI (via CARD domain), MAVS/IPS1 and DDX60. Found in a complex with RIGI and IFIH1/MDA5. Interacts with ANKRD17. Directly interacts with ATG5 and ATG12, either as ATG5 and ATG12 monomers or as ATG12-ATG5 conjugates. Highly expressed in mammary tissues. Expressed in liver and testis. Expressed at lower level in spleen, embryo, mammary gland and breast tumors.

It localises to the cytoplasm. The catalysed reaction is ATP + H2O = ADP + phosphate + H(+). Functionally, acts as a regulator of RIGI and IFIH1/MDA5 mediated antiviral signaling. Cannot initiate antiviral signaling as it lacks the CARD domain required for activating MAVS/IPS1-dependent signaling events. Can have both negative and positive regulatory functions related to RIGI and IFIH1/MDA5 signaling and this role in regulating signaling may be complex and could probably depend on characteristics of the infecting virus or target cells, or both. Its inhibitory action on RIG-I signaling may involve the following mechanisms: competition with RIGI for binding to the viral RNA, binding to RIGI and inhibiting its dimerization and interaction with MAVS/IPS1, competing with IKBKE in its binding to MAVS/IPS1 thereby inhibiting activation of interferon regulatory factor 3 (IRF3). Its positive regulatory role may involve unwinding or stripping nucleoproteins of viral RNA thereby facilitating their recognition by RIGI and IFIH1/MDA5. Involved in the innate immune response to various RNA viruses and some DNA viruses such as poxviruses, and also to the bacterial pathogen Listeria monocytogenes. Can bind both ssRNA and dsRNA, with a higher affinity for dsRNA. Shows a preference to 5'-triphosphorylated RNA, although it can recognize RNA lacking a 5'-triphosphate. This is ATP-dependent RNA helicase DHX58 from Mus musculus (Mouse).